The sequence spans 375 residues: Succinyl-diaminopimelate desuccinylase (375 aa).

His66 serves as a coordination point for Zn(2+). Residue Asp68 is part of the active site. Asp99 contacts Zn(2+). Catalysis depends on Glu130, which acts as the Proton acceptor. Zn(2+)-binding residues include Glu131, Glu159, and His345.

Belongs to the peptidase M20A family. DapE subfamily. As to quaternary structure, homodimer. Requires Zn(2+) as cofactor. It depends on Co(2+) as a cofactor.

The catalysed reaction is N-succinyl-(2S,6S)-2,6-diaminopimelate + H2O = (2S,6S)-2,6-diaminopimelate + succinate. The protein operates within amino-acid biosynthesis; L-lysine biosynthesis via DAP pathway; LL-2,6-diaminopimelate from (S)-tetrahydrodipicolinate (succinylase route): step 3/3. Catalyzes the hydrolysis of N-succinyl-L,L-diaminopimelic acid (SDAP), forming succinate and LL-2,6-diaminopimelate (DAP), an intermediate involved in the bacterial biosynthesis of lysine and meso-diaminopimelic acid, an essential component of bacterial cell walls. This is Succinyl-diaminopimelate desuccinylase from Xanthobacter autotrophicus (strain ATCC BAA-1158 / Py2).